The following is a 460-amino-acid chain: Muscarinic acetylcholine receptor M1 (460 aa).

Residues 1 to 22 (MNTSVPPAVSPNITVLAPGKGP) are Extracellular-facing. 2 N-linked (GlcNAc...) asparagine glycosylation sites follow: Asn-2 and Asn-12. Residues 23-48 (WQVAFIGITTGLLSLATVTGNLLVLI) form a helical membrane-spanning segment. Over 49 to 62 (SFKVNTELKTVNNY) the chain is Cytoplasmic. A helical transmembrane segment spans residues 63–84 (FLLSLACADLIIGTFSMNLYTT). Residues 85 to 95 (YLLMGHWALGT) are Extracellular-facing. The helical transmembrane segment at 96 to 121 (LACDLWLALDYVASNASVMNLLLISF) threads the bilayer. The cysteines at positions 98 and 178 are disulfide-linked. Residues 122–142 (DRYFSVTRPLSYRAKRTPRRA) are Cytoplasmic-facing. Residues 143-164 (ALMIGLAWLVSFVLWAPAILFW) form a helical membrane-spanning segment. At 165–185 (QYLVGERTVLAGQCYIQFLSQ) the chain is on the extracellular side. The helical transmembrane segment at 186–209 (PIITFGTAMAAFYLPVTVMCTLYW) threads the bilayer. Over 210–366 (RIYRETENRA…LVKEKKAART (157 aa)) the chain is Cytoplasmic. Disordered stretches follow at residues 225–257 (LQGSETPGKGGGSSSSSERSQPGAEGSPESPPG), 274–297 (WKEEEEEDEGSMESLTSSEGEEPG), and 310–351 (EAQA…QLAK). Residue Thr-230 is modified to Phosphothreonine. Over residues 238–257 (SSSSERSQPGAEGSPESPPG) the composition is skewed to low complexity. Ser-254 is modified (phosphoserine). Over residues 328–343 (RPTKKGRDRGGKGQKP) the composition is skewed to basic residues. The helical transmembrane segment at 367–390 (LSAILLAFILTWTPYNIMVLVSTF) threads the bilayer. Residues 391–397 (CKDCVPE) are Extracellular-facing. The chain crosses the membrane as a helical span at residues 398 to 420 (TLWELGYWLCYVNSTVNPMCYAL). The Cytoplasmic segment spans residues 421-460 (CNKAFRDTFRLLLLCRWDKRRWRKIPKRPGSVHRTPSRQC). The residue at position 451 (Ser-451) is a Phosphoserine. Phosphothreonine is present on Thr-455. Ser-457 bears the Phosphoserine mark.

This sequence belongs to the G-protein coupled receptor 1 family. Muscarinic acetylcholine receptor subfamily. CHRM1 sub-subfamily. As to quaternary structure, interacts with GPRASP2. Interacts with TMEM147.

The protein resides in the cell membrane. It is found in the postsynaptic cell membrane. In terms of biological role, the muscarinic acetylcholine receptor mediates various cellular responses, including inhibition of adenylate cyclase, breakdown of phosphoinositides and modulation of potassium channels through the action of G proteins. Primary transducing effect is Pi turnover. In Mus musculus (Mouse), this protein is Muscarinic acetylcholine receptor M1 (Chrm1).